The sequence spans 162 residues: Beta-lactoglobulin-1 (162 aa).

2 disulfides stabilise this stretch: Cys-66–Cys-160 and Cys-106–Cys-119.

It belongs to the calycin superfamily. Lipocalin family. In terms of assembly, monomer. Synthesized in mammary gland and secreted in milk.

It is found in the secreted. Primary component of whey, it binds retinol and is probably involved in the transport of that molecule. This chain is Beta-lactoglobulin-1 (LGB1), found in Equus asinus (Donkey).